The primary structure comprises 418 residues: MLLLVDCSSCRTPLHLPPGATRIRCAICHAFTLIAPEPRLQSHASASPFPFPNSSPAPSTFIYPPPTPSPYTHAPHAPSPFNHAPPDSYPFTHAPPASSPFNHAPPGPPPPVHGQKRAVIVGVSYKNTKDELKGCINDANCMKFMLMKRFQFPESCILMLTEEEADPMRWPTKNNITMAMHWLVLSCKPGDSLVFHFSGHGNNQMDDNGDEVDGFDETLLPVDHRTSGVIVDDEINATIVRPLPYGVKLHAIVDACHSGTVMDLPYLCRMDRLGNYEWEDHRPKTGMWKGTSGGEVFSFTGCDDDQTSADTPQLSGSAWTGAMTYAFIQAIERGHGMTYGSLLNAMRSTVHEIFDKNKGRELVEVGGADFLSTLLGLLILGASPPDEEEEVNQAPQKTQEPQLSANEAFAVYEKPFSL.

Positions 68-113 (PSPYTHAPHAPSPFNHAPPDSYPFTHAPPASSPFNHAPPGPPPPVH) are disordered. Residues 70 to 80 (PYTHAPHAPSP) show a composition bias toward low complexity. Over residues 103 to 112 (HAPPGPPPPV) the composition is skewed to pro residues. Residues histidine 200 and cysteine 256 contribute to the active site. The segment at 385–406 (PDEEEEVNQAPQKTQEPQLSAN) is disordered. The segment covering 393 to 405 (QAPQKTQEPQLSA) has biased composition (polar residues).

This sequence belongs to the peptidase C14B family.

Functionally, acts as a negative regulator of oxidative stress cell death and hypersensitive cell death response mediated by immune response. Acts via indirect or direct regulation of AMC1 at postranscriptional level. This chain is Metacaspase-2 (AMC2), found in Arabidopsis thaliana (Mouse-ear cress).